The chain runs to 526 residues: Opine oxidase subunit A (526 aa).

[2Fe-2S] cluster-binding residues include C396, C398, C431, and C436.

It to T-protein and to dimethylglycine dehydrogenase. Heterodimer of a subunit A and a subunit B. Requires [2Fe-2S] cluster as cofactor.

It participates in opine metabolism; octopine degradation. Oxidative cleavage of octopine into L-arginine and pyruvate. This Rhizobium meliloti (Ensifer meliloti) protein is Opine oxidase subunit A (ooxA).